Consider the following 267-residue polypeptide: HTH-type transcriptional activator CsvR (267 aa).

2 consecutive DNA-binding regions (H-T-H motif) follow at residues 183–204 and 230–253; these read AIIADVFNVSEITIRKRLESED and ISQISNMIGISSASYFIRIFNKHF.

As to quaternary structure, homodimer.

Functionally, transcriptional activator of fimbrial genes in enterotoxigenic E.coli. This chain is HTH-type transcriptional activator CsvR, found in Escherichia coli.